The primary structure comprises 246 residues: MTSEAAPASTAVTYKRVMLKISGEALMGDQGYGLHPPTVQRIAREVQAVHRLGVEICMVIGGGNIFRGLQGSAQGMERTTADYMGMLATVMNALAMQAALESLGIFTRVISAIPMDQVCEPYIRRRAVRHLEKKRVCIFAAGTGNPYFTTDTAATLRANEMACQAIFKGTKVDGVYDKDPRKFADARRYETVSYDECLQKHLGVMDASAIALARDNDLPIIVFSLDEPGGFCGILRGEGTYTRVQG.

20 to 23 (KISG) contacts ATP. Residues 28-33 (GDQGYG) are involved in allosteric activation by GTP. G62 is a binding site for UMP. G63 and R67 together coordinate ATP. Residues D82 and 143–150 (TGNPYFTT) each bind UMP. Residues T170, Y176, and D179 each coordinate ATP.

The protein belongs to the UMP kinase family. As to quaternary structure, homohexamer.

It is found in the cytoplasm. The catalysed reaction is UMP + ATP = UDP + ADP. It participates in pyrimidine metabolism; CTP biosynthesis via de novo pathway; UDP from UMP (UMPK route): step 1/1. Its activity is regulated as follows. Allosterically activated by GTP. Inhibited by UTP. Its function is as follows. Catalyzes the reversible phosphorylation of UMP to UDP. In Cereibacter sphaeroides (strain ATCC 17025 / ATH 2.4.3) (Rhodobacter sphaeroides), this protein is Uridylate kinase.